The chain runs to 1237 residues: ATP-dependent RNA helicase DEAH13 (1237 aa).

Disordered regions lie at residues 1–51 (MASV…NSNV) and 115–148 (AMQL…EPTT). Residues 24 to 38 (SNKMQDKLNSNNNTG) are compositionally biased toward polar residues. The segment covering 131–143 (SVEQNDNDDDSCM) has biased composition (acidic residues). Residues 251–443 (MEAINRHPAV…KRLFPNIPPL (193 aa)) enclose the Helicase ATP-binding domain. Residue 264-271 (GQTGCGKT) coordinates ATP. Residues 367 to 370 (DEAH) carry the DEAH box motif. The interval 543-585 (DDDSNNQNSRFSSHGEDPSDIGDGNYDDDFEEEDMYESDEDRD) is disordered. Acidic residues predominate over residues 567–585 (NYDDDFEEEDMYESDEDRD). A Helicase C-terminal domain is found at 605–776 (ALRAAFNALA…GVILLMKSMN (172 aa)). The disordered stretch occupies residues 876–910 (EKKNESKDADKTVKQEDKQRKKDRKEKIKAARDRF).

Belongs to the DEAD box helicase family. DEAH subfamily.

The catalysed reaction is ATP + H2O = ADP + phosphate + H(+). In Arabidopsis thaliana (Mouse-ear cress), this protein is ATP-dependent RNA helicase DEAH13.